Consider the following 621-residue polypeptide: Acetolactate synthase (621 aa).

Low complexity predominate over residues 1–19; it reads MSAPTRRPAPDAPGAAGIA. The interval 1 to 39 is disordered; the sequence is MSAPTRRPAPDAPGAAGIAPAPPAPAAKPAAGKPKRIGP. Residue Glu-89 coordinates thiamine diphosphate. FAD-binding positions include Arg-190, 296-317, and 339-358; these read HGTVAAVAALQRSDLLIALGTR and DIDPAEIGKNRHADVPIVGD. Residues 432-512 are thiamine pyrophosphate binding; that stretch reads HDQMWAAQFI…IKVALINNGN (81 aa). The Mg(2+) site is built by Asp-483 and Asn-510.

This sequence belongs to the TPP enzyme family. Requires Mg(2+) as cofactor. Thiamine diphosphate serves as cofactor.

It carries out the reaction 2 pyruvate + H(+) = (2S)-2-acetolactate + CO2. Its pathway is amino-acid biosynthesis; L-isoleucine biosynthesis; L-isoleucine from 2-oxobutanoate: step 1/4. The protein operates within amino-acid biosynthesis; L-valine biosynthesis; L-valine from pyruvate: step 1/4. The sequence is that of Acetolactate synthase (ilvB) from Mycobacterium avium.